We begin with the raw amino-acid sequence, 350 residues long: Fe(2+) transport protein 2 (350 aa).

A signal peptide spans 1–21; that stretch reads MATTKLVYILLILFTFTVSPA. Topologically, residues 22-47 are extracellular; that stretch reads ISTAPEHCDSGFDNPCINKAKALPLK. Residues 48–68 form a helical membrane-spanning segment; that stretch reads IVAIVAILTTSLIGVTSPLFS. Residues 69 to 80 are Cytoplasmic-facing; sequence RYISFLRPDGNG. Residues 81–101 traverse the membrane as a helical segment; it reads FMIVKCFSSGIILGTGFMHVL. The Extracellular portion of the chain corresponds to 102 to 120; it reads PDSFEMLSSKCLSDNPWHK. The chain crosses the membrane as a helical span at residues 121 to 141; it reads FPFAGFVAMMSGLVTLAIDSI. The Cytoplasmic segment spans residues 142–195; the sequence is TTSLYTGKNSVGPVPDEEYGIDQEKAIHMVGHNHSHGHGVVLATKDDGQLLRYQ. Residues 196–216 form a helical membrane-spanning segment; it reads VIAMVLEVGILFHSVVIGLSL. At 217-227 the chain is on the extracellular side; it reads GATNDSCTIKG. The helical transmembrane segment at 228-248 threads the bilayer; that stretch reads LIIALCFHHLFEGIGLGGCIL. Residues 249-257 are Cytoplasmic-facing; sequence QADFTNVKK. A helical transmembrane segment spans residues 258–278; it reads FLMAFFFTGTTPCGIFLGIAL. Over 279–289 the chain is Extracellular; it reads SSIYRDNSPTA. Residues 290-310 form a helical membrane-spanning segment; it reads LITIGLLNACSAGMLIYMALV. Residues 311–329 lie on the Cytoplasmic side of the membrane; the sequence is DLLATEFMGSMLQGSIKLQ. A helical membrane pass occupies residues 330–350; sequence IKCFTAALLGCAVMSVVAVWA.

It belongs to the ZIP transporter (TC 2.A.5) family. Expressed in the external cell layers of the root subapical zone.

The protein localises to the cell membrane. In terms of biological role, high-affinity iron transporter that mediates under iron-deficiency the iron uptake from the rhizosphere across the plasma membrane in the root epidermal layer. Could also be capable of transporting zinc ions. This is Fe(2+) transport protein 2 (IRT2) from Arabidopsis thaliana (Mouse-ear cress).